The primary structure comprises 475 residues: Beta-amyrin 16-alpha-hydroxylase CYP87D16 (475 aa).

The helical transmembrane segment at 3–23 (VVGLIGVAVVTILITQYVYKW) threads the bilayer. Position 423 (Cys423) interacts with heme.

It belongs to the cytochrome P450 family. It depends on heme as a cofactor.

Its subcellular location is the membrane. It catalyses the reaction beta-amyrin + reduced [NADPH--hemoprotein reductase] + O2 = 16alpha-hydroxy-beta-amyrin + oxidized [NADPH--hemoprotein reductase] + H2O + H(+). In terms of biological role, involved in the biosynthetic pathway of maesasaponins, which are oleanane-type saponins with diverse biological activities. Catalyzes the C-16alpha oxidation of beta-amyrin to form 16alpha-hydroxy-beta-amyrin. The polypeptide is Beta-amyrin 16-alpha-hydroxylase CYP87D16 (Maesa lanceolata (False assegai)).